A 30-amino-acid chain; its full sequence is Photosystem I reaction center subunit XII (30 aa).

A helical membrane pass occupies residues 7–26 (IFVALLFALVSAVLAIRLGT).

Belongs to the PsaM family.

The protein resides in the plastid. It localises to the chloroplast thylakoid membrane. The protein is Photosystem I reaction center subunit XII of Gracilaria tenuistipitata var. liui (Red alga).